Here is a 392-residue protein sequence, read N- to C-terminus: Chaperone protein DnaJ (392 aa).

Positions aspartate 2 to glycine 67 constitute a J domain. A CR-type zinc finger spans residues glycine 148 to lysine 226. Zn(2+)-binding residues include cysteine 161, cysteine 164, cysteine 178, cysteine 181, cysteine 200, cysteine 203, cysteine 214, and cysteine 217. CXXCXGXG motif repeat units follow at residues cysteine 161–glycine 168, cysteine 178–glycine 185, cysteine 200–glycine 207, and cysteine 214–glycine 221.

The protein belongs to the DnaJ family. As to quaternary structure, homodimer. Zn(2+) is required as a cofactor.

Its subcellular location is the cytoplasm. Its function is as follows. Participates actively in the response to hyperosmotic and heat shock by preventing the aggregation of stress-denatured proteins and by disaggregating proteins, also in an autonomous, DnaK-independent fashion. Unfolded proteins bind initially to DnaJ; upon interaction with the DnaJ-bound protein, DnaK hydrolyzes its bound ATP, resulting in the formation of a stable complex. GrpE releases ADP from DnaK; ATP binding to DnaK triggers the release of the substrate protein, thus completing the reaction cycle. Several rounds of ATP-dependent interactions between DnaJ, DnaK and GrpE are required for fully efficient folding. Also involved, together with DnaK and GrpE, in the DNA replication of plasmids through activation of initiation proteins. This is Chaperone protein DnaJ from Chlamydia pneumoniae (Chlamydophila pneumoniae).